The primary structure comprises 319 residues: Acetyl-coenzyme A carboxylase carboxyl transferase subunit alpha (319 aa).

A CoA carboxyltransferase C-terminal domain is found at 35 to 296; it reads NIDEEVHRLR…KAQLLEDLAD (262 aa).

Belongs to the AccA family. As to quaternary structure, acetyl-CoA carboxylase is a heterohexamer composed of biotin carboxyl carrier protein (AccB), biotin carboxylase (AccC) and two subunits each of ACCase subunit alpha (AccA) and ACCase subunit beta (AccD).

Its subcellular location is the cytoplasm. The enzyme catalyses N(6)-carboxybiotinyl-L-lysyl-[protein] + acetyl-CoA = N(6)-biotinyl-L-lysyl-[protein] + malonyl-CoA. It functions in the pathway lipid metabolism; malonyl-CoA biosynthesis; malonyl-CoA from acetyl-CoA: step 1/1. Functionally, component of the acetyl coenzyme A carboxylase (ACC) complex. First, biotin carboxylase catalyzes the carboxylation of biotin on its carrier protein (BCCP) and then the CO(2) group is transferred by the carboxyltransferase to acetyl-CoA to form malonyl-CoA. The protein is Acetyl-coenzyme A carboxylase carboxyl transferase subunit alpha of Salmonella dublin (strain CT_02021853).